We begin with the raw amino-acid sequence, 293 residues long: Ribosomal protein L11 methyltransferase (293 aa).

Residues T145, G166, D188, and N230 each coordinate S-adenosyl-L-methionine.

Belongs to the methyltransferase superfamily. PrmA family.

It localises to the cytoplasm. It catalyses the reaction L-lysyl-[protein] + 3 S-adenosyl-L-methionine = N(6),N(6),N(6)-trimethyl-L-lysyl-[protein] + 3 S-adenosyl-L-homocysteine + 3 H(+). Functionally, methylates ribosomal protein L11. The sequence is that of Ribosomal protein L11 methyltransferase from Shewanella frigidimarina (strain NCIMB 400).